Reading from the N-terminus, the 195-residue chain is Putative nucleotidase BH1399 (195 aa).

It belongs to the 5'(3')-deoxyribonucleotidase family.

The protein is Putative nucleotidase BH1399 of Halalkalibacterium halodurans (strain ATCC BAA-125 / DSM 18197 / FERM 7344 / JCM 9153 / C-125) (Bacillus halodurans).